The sequence spans 196 residues: FMN-dependent NADH:quinone oxidoreductase (196 aa).

S10 contributes to the FMN binding site.

Belongs to the azoreductase type 1 family. As to quaternary structure, homodimer. The cofactor is FMN.

It catalyses the reaction 2 a quinone + NADH + H(+) = 2 a 1,4-benzosemiquinone + NAD(+). The enzyme catalyses N,N-dimethyl-1,4-phenylenediamine + anthranilate + 2 NAD(+) = 2-(4-dimethylaminophenyl)diazenylbenzoate + 2 NADH + 2 H(+). Its function is as follows. Quinone reductase that provides resistance to thiol-specific stress caused by electrophilic quinones. Also exhibits azoreductase activity. Catalyzes the reductive cleavage of the azo bond in aromatic azo compounds to the corresponding amines. This is FMN-dependent NADH:quinone oxidoreductase from Cereibacter sphaeroides (strain KD131 / KCTC 12085) (Rhodobacter sphaeroides).